Here is a 136-residue protein sequence, read N- to C-terminus: uncharacterized protein (136 aa).

Residues 1–33 are disordered; sequence MRDHLPPGLPPDPFADDPCDPSAALEAVEPGQP.

This sequence to M.leprae ML0386.

This is an uncharacterized protein from Mycobacterium tuberculosis (strain CDC 1551 / Oshkosh).